The sequence spans 212 residues: Pyridoxine/pyridoxamine 5'-phosphate oxidase (212 aa).

Residues 8–11 (RRTY) and K66 each bind substrate. Residues 61 to 66 (RIVLLK), 76 to 77 (FT), R82, K83, and Q105 each bind FMN. Substrate is bound by residues Y123, R127, and S131. FMN-binding positions include 140–141 (QS) and W184. A substrate-binding site is contributed by 190-192 (RLH). R194 contacts FMN.

Belongs to the pyridoxamine 5'-phosphate oxidase family. In terms of assembly, homodimer. FMN is required as a cofactor.

The catalysed reaction is pyridoxamine 5'-phosphate + O2 + H2O = pyridoxal 5'-phosphate + H2O2 + NH4(+). It carries out the reaction pyridoxine 5'-phosphate + O2 = pyridoxal 5'-phosphate + H2O2. Its pathway is cofactor metabolism; pyridoxal 5'-phosphate salvage; pyridoxal 5'-phosphate from pyridoxamine 5'-phosphate: step 1/1. It functions in the pathway cofactor metabolism; pyridoxal 5'-phosphate salvage; pyridoxal 5'-phosphate from pyridoxine 5'-phosphate: step 1/1. Catalyzes the oxidation of either pyridoxine 5'-phosphate (PNP) or pyridoxamine 5'-phosphate (PMP) into pyridoxal 5'-phosphate (PLP). This is Pyridoxine/pyridoxamine 5'-phosphate oxidase from Cupriavidus taiwanensis (strain DSM 17343 / BCRC 17206 / CCUG 44338 / CIP 107171 / LMG 19424 / R1) (Ralstonia taiwanensis (strain LMG 19424)).